The primary structure comprises 338 residues: Lipoate-protein ligase A (338 aa).

Residues 29 to 216 (PATQRVLFLW…AFFSHYGERV (188 aa)) form the BPL/LPL catalytic domain. ATP is bound by residues arginine 71, 76–79 (GAVF), and lysine 134. Lysine 134 contacts (R)-lipoate.

The protein belongs to the LplA family. Monomer.

Its subcellular location is the cytoplasm. It catalyses the reaction L-lysyl-[lipoyl-carrier protein] + (R)-lipoate + ATP = N(6)-[(R)-lipoyl]-L-lysyl-[lipoyl-carrier protein] + AMP + diphosphate + H(+). The protein operates within protein modification; protein lipoylation via exogenous pathway; protein N(6)-(lipoyl)lysine from lipoate: step 1/2. Its pathway is protein modification; protein lipoylation via exogenous pathway; protein N(6)-(lipoyl)lysine from lipoate: step 2/2. Functionally, catalyzes both the ATP-dependent activation of exogenously supplied lipoate to lipoyl-AMP and the transfer of the activated lipoyl onto the lipoyl domains of lipoate-dependent enzymes. This chain is Lipoate-protein ligase A, found in Klebsiella pneumoniae (strain 342).